The primary structure comprises 350 residues: MFS transporter OpS2 (350 aa).

Transmembrane regions (helical) follow at residues 3–23, 34–54, 65–85, 141–161, 174–194, 227–247, 253–273, and 312–332; these read FLAGGASASVAAVGAGTVADL, GYFFLGPMLGPLVSPIIGGIL, WGAVVYGGLVWLSMIFLLPET, FMTCYYASISFACYYILNLAI, AIILGLLYIPSALGSIVASVV, MCENAWIPAFVFPAALLVFGW, IFWFAPIVVTFFFGLGNSLIF, and PLLGAIGTQWLFTGLAVICWA.

The protein belongs to the major facilitator superfamily.

It is found in the cell membrane. Its function is as follows. MFS transporter; part of the gene cluster that mediates the biosynthesis of the bibenzoquinone oosporein, a metabolite required for fungal virulence that acts by evading host immunity to facilitate fungal multiplication in insects. The function of this putative MFS transporter remains unclear since its deletion leads to increased oosporein production. This Beauveria bassiana (strain ARSEF 2860) (White muscardine disease fungus) protein is MFS transporter OpS2.